A 125-amino-acid polypeptide reads, in one-letter code: Large ribosomal subunit protein bL19 (125 aa).

Belongs to the bacterial ribosomal protein bL19 family.

This protein is located at the 30S-50S ribosomal subunit interface and may play a role in the structure and function of the aminoacyl-tRNA binding site. The protein is Large ribosomal subunit protein bL19 of Synechococcus sp. (strain JA-2-3B'a(2-13)) (Cyanobacteria bacterium Yellowstone B-Prime).